The following is a 123-amino-acid chain: UPF0102 protein CLJ_B2665 (123 aa).

This sequence belongs to the UPF0102 family.

The protein is UPF0102 protein CLJ_B2665 of Clostridium botulinum (strain 657 / Type Ba4).